Reading from the N-terminus, the 232-residue chain is Orotidine 5'-phosphate decarboxylase (232 aa).

Substrate-binding positions include D16, K38, 65 to 74, T119, R180, Q189, G209, and R210; that span reads DLKLHDIGNT. K67 (proton donor) is an active-site residue.

This sequence belongs to the OMP decarboxylase family. Type 1 subfamily. As to quaternary structure, homodimer.

It catalyses the reaction orotidine 5'-phosphate + H(+) = UMP + CO2. The protein operates within pyrimidine metabolism; UMP biosynthesis via de novo pathway; UMP from orotate: step 2/2. In terms of biological role, catalyzes the decarboxylation of orotidine 5'-monophosphate (OMP) to uridine 5'-monophosphate (UMP). The protein is Orotidine 5'-phosphate decarboxylase of Methylorubrum populi (strain ATCC BAA-705 / NCIMB 13946 / BJ001) (Methylobacterium populi).